A 644-amino-acid chain; its full sequence is Exoribonuclease 2 (644 aa).

The RNB domain occupies 189–516; that stretch reads REDLTALNFV…NHRLLKAMIT (328 aa). Residues 561-643 enclose the S1 motif domain; sequence DTRFTAEIID…ETRNVIARPV (83 aa).

The protein belongs to the RNR ribonuclease family. RNase II subfamily.

Its subcellular location is the cytoplasm. The catalysed reaction is Exonucleolytic cleavage in the 3'- to 5'-direction to yield nucleoside 5'-phosphates.. Its function is as follows. Involved in mRNA degradation. Hydrolyzes single-stranded polyribonucleotides processively in the 3' to 5' direction. In Yersinia pestis bv. Antiqua (strain Antiqua), this protein is Exoribonuclease 2.